The following is a 214-amino-acid chain: Small ribosomal subunit protein uS2 (214 aa).

It belongs to the universal ribosomal protein uS2 family.

The sequence is that of Small ribosomal subunit protein uS2 from Methanococcoides burtonii (strain DSM 6242 / NBRC 107633 / OCM 468 / ACE-M).